We begin with the raw amino-acid sequence, 263 residues long: Endonuclease 8 (263 aa).

The active-site Schiff-base intermediate with DNA is the Pro2. Glu3 serves as the catalytic Proton donor. Lys53 acts as the Proton donor; for beta-elimination activity in catalysis. Positions 70, 125, and 169 each coordinate DNA. The FPG-type zinc-finger motif lies at 229-263; that stretch reads KLFHRDGEACERCGGIIEKTTLSSRPFYWCPHCQK. Arg253 (proton donor; for delta-elimination activity) is an active-site residue.

This sequence belongs to the FPG family. Zn(2+) is required as a cofactor.

It carries out the reaction 2'-deoxyribonucleotide-(2'-deoxyribose 5'-phosphate)-2'-deoxyribonucleotide-DNA = a 3'-end 2'-deoxyribonucleotide-(2,3-dehydro-2,3-deoxyribose 5'-phosphate)-DNA + a 5'-end 5'-phospho-2'-deoxyribonucleoside-DNA + H(+). Functionally, involved in base excision repair of DNA damaged by oxidation or by mutagenic agents. Acts as a DNA glycosylase that recognizes and removes damaged bases. Has a preference for oxidized pyrimidines, such as thymine glycol, 5,6-dihydrouracil and 5,6-dihydrothymine. Has AP (apurinic/apyrimidinic) lyase activity and introduces nicks in the DNA strand. Cleaves the DNA backbone by beta-delta elimination to generate a single-strand break at the site of the removed base with both 3'- and 5'-phosphates. The chain is Endonuclease 8 from Salmonella typhimurium (strain SL1344).